The following is a 457-amino-acid chain: Cysteine--tRNA ligase (457 aa).

Residue cysteine 29 coordinates Zn(2+). Positions 31 to 41 (PTVYDNPHIGN) match the 'HIGH' region motif. Zn(2+) is bound by residues cysteine 214, histidine 239, and glutamate 243. The short motif at 272 to 276 (KMSKS) is the 'KMSKS' region element. Lysine 275 is a binding site for ATP.

The protein belongs to the class-I aminoacyl-tRNA synthetase family. Monomer. Zn(2+) serves as cofactor.

It localises to the cytoplasm. It catalyses the reaction tRNA(Cys) + L-cysteine + ATP = L-cysteinyl-tRNA(Cys) + AMP + diphosphate. This is Cysteine--tRNA ligase (cysS) from Rickettsia prowazekii (strain Madrid E).